Here is a 216-residue protein sequence, read N- to C-terminus: Adenylate kinase (216 aa).

Residue 10 to 15 participates in ATP binding; it reads GAGKGT. The interval 30–59 is NMP; it reads STGDMLREAVKADTPLGIEAKKVMDVGGLI. Residues T31, R36, 57-59, 85-88, and Q92 contribute to the AMP site; these read GLI and GFPR. The tract at residues 122 to 159 is LID; that stretch reads GRRAHLTSGRTYHIVYNPPKVEGIDDITGEELIQRTDD. ATP-binding positions include R123 and 132 to 133; that span reads TY. AMP-binding residues include R156 and R167. G202 is an ATP binding site.

This sequence belongs to the adenylate kinase family. Monomer.

It is found in the cytoplasm. The enzyme catalyses AMP + ATP = 2 ADP. It participates in purine metabolism; AMP biosynthesis via salvage pathway; AMP from ADP: step 1/1. In terms of biological role, catalyzes the reversible transfer of the terminal phosphate group between ATP and AMP. Plays an important role in cellular energy homeostasis and in adenine nucleotide metabolism. The polypeptide is Adenylate kinase (Ruthia magnifica subsp. Calyptogena magnifica).